Consider the following 320-residue polypeptide: Aspartate carbamoyltransferase catalytic subunit (320 aa).

Residues Arg-70 and Thr-71 each coordinate carbamoyl phosphate. Lys-98 lines the L-aspartate pocket. Positions 120, 149, and 152 each coordinate carbamoyl phosphate. Arg-182 and Arg-237 together coordinate L-aspartate. The carbamoyl phosphate site is built by Gly-278 and Pro-279.

The protein belongs to the aspartate/ornithine carbamoyltransferase superfamily. ATCase family. In terms of assembly, heterododecamer (2C3:3R2) of six catalytic PyrB chains organized as two trimers (C3), and six regulatory PyrI chains organized as three dimers (R2).

It catalyses the reaction carbamoyl phosphate + L-aspartate = N-carbamoyl-L-aspartate + phosphate + H(+). The protein operates within pyrimidine metabolism; UMP biosynthesis via de novo pathway; (S)-dihydroorotate from bicarbonate: step 2/3. Its function is as follows. Catalyzes the condensation of carbamoyl phosphate and aspartate to form carbamoyl aspartate and inorganic phosphate, the committed step in the de novo pyrimidine nucleotide biosynthesis pathway. This is Aspartate carbamoyltransferase catalytic subunit from Ruthia magnifica subsp. Calyptogena magnifica.